Consider the following 304-residue polypeptide: Homoserine kinase (304 aa).

ATP is bound at residue 91 to 101 (PLGKGMGSSAA).

This sequence belongs to the GHMP kinase family. Homoserine kinase subfamily.

The protein resides in the cytoplasm. The enzyme catalyses L-homoserine + ATP = O-phospho-L-homoserine + ADP + H(+). It participates in amino-acid biosynthesis; L-threonine biosynthesis; L-threonine from L-aspartate: step 4/5. Functionally, catalyzes the ATP-dependent phosphorylation of L-homoserine to L-homoserine phosphate. The sequence is that of Homoserine kinase from Solibacter usitatus (strain Ellin6076).